Reading from the N-terminus, the 209-residue chain is Uracil phosphoribosyltransferase (209 aa).

Residues Arg-79, Arg-104, and 131–139 each bind 5-phospho-alpha-D-ribose 1-diphosphate; that span reads DPMLATGGS. Uracil is bound by residues Ile-194 and 199–201; that span reads GDA. A 5-phospho-alpha-D-ribose 1-diphosphate-binding site is contributed by Asp-200.

Belongs to the UPRTase family. It depends on Mg(2+) as a cofactor.

The enzyme catalyses UMP + diphosphate = 5-phospho-alpha-D-ribose 1-diphosphate + uracil. It participates in pyrimidine metabolism; UMP biosynthesis via salvage pathway; UMP from uracil: step 1/1. Allosterically activated by GTP. In terms of biological role, catalyzes the conversion of uracil and 5-phospho-alpha-D-ribose 1-diphosphate (PRPP) to UMP and diphosphate. In Streptococcus mutans serotype c (strain ATCC 700610 / UA159), this protein is Uracil phosphoribosyltransferase.